The primary structure comprises 129 residues: Small ribosomal subunit protein uS11 (129 aa).

Belongs to the universal ribosomal protein uS11 family. As to quaternary structure, part of the 30S ribosomal subunit. Interacts with proteins S7 and S18. Binds to IF-3.

Functionally, located on the platform of the 30S subunit, it bridges several disparate RNA helices of the 16S rRNA. Forms part of the Shine-Dalgarno cleft in the 70S ribosome. The protein is Small ribosomal subunit protein uS11 of Glaesserella parasuis serovar 5 (strain SH0165) (Haemophilus parasuis).